A 61-amino-acid chain; its full sequence is Adipokinetic prohormone type 2 (61 aa).

A signal peptide spans 1 to 22 (MRQGCALTLMLLVVVCAALSAA). A Pyrrolidone carboxylic acid modification is found at glutamine 23. Residue tryptophan 30 is modified to Tryptophan amide.

The protein belongs to the AKH/HRTH/RPCH family. As to quaternary structure, adipokinetic hormone precursor-related peptide (APRP) can form three type of disulfide-bond dimers: p1 (alpha-alpha), p2 (alpha-beta), and p3 (beta-beta).

Its subcellular location is the secreted. In terms of biological role, this hormone, released from cells in the corpora cardiaca, causes release of diglycerides from the fat body and stimulation of muscles to use these diglycerides as an energy source during energy-demanding processes. This Schistocerca nitens (Vagrant locust) protein is Adipokinetic prohormone type 2.